Consider the following 236-residue polypeptide: SERTA domain-containing protein 1 (236 aa).

The SERTA domain maps to 38-85 (PTVASSSLFDLSVVKLHHSLRQSEPDLRHLVLVVNTLRRIQASMEPAP). Positions 190 to 211 (ASEGLKPGPENGPAKEEPPELD) are disordered.

As to quaternary structure, interacts with the PHD-bromodomain of TIF1, TRIM28/TIF1B and p300/CBP. Interacts with E2F1 and TFDP1; modulates transactivation activity of TFDP1/E2F complexes. Also interacts with CDK4. Polyubiquitinated, which promotes proteasomal degradation. As to expression, detected at in testis, lung and, at lower levels, in muscle, liver, spleen, brain and heart.

Acts at E2F-responsive promoters as coregulator to integrate signals provided by PHD- and/or bromodomain-containing transcription factors. Stimulates E2F1/TFDP1 transcriptional activity. Renders the activity of cyclin D1/CDK4 resistant to the inhibitory effects of CDKN2A/p16INK4A. The sequence is that of SERTA domain-containing protein 1 (Sertad1) from Mus musculus (Mouse).